Here is a 476-residue protein sequence, read N- to C-terminus: Glycogen synthase (476 aa).

K15 is a binding site for ADP-alpha-D-glucose.

The protein belongs to the glycosyltransferase 1 family. Bacterial/plant glycogen synthase subfamily.

The catalysed reaction is [(1-&gt;4)-alpha-D-glucosyl](n) + ADP-alpha-D-glucose = [(1-&gt;4)-alpha-D-glucosyl](n+1) + ADP + H(+). The protein operates within glycan biosynthesis; glycogen biosynthesis. Its function is as follows. Synthesizes alpha-1,4-glucan chains using ADP-glucose. This is Glycogen synthase from Yersinia enterocolitica serotype O:8 / biotype 1B (strain NCTC 13174 / 8081).